The sequence spans 82 residues: Small ribosomal subunit protein bS16 (82 aa).

The protein belongs to the bacterial ribosomal protein bS16 family.

The polypeptide is Small ribosomal subunit protein bS16 (Dehalococcoides mccartyi (strain ATCC BAA-2100 / JCM 16839 / KCTC 5957 / BAV1)).